The chain runs to 356 residues: Phosphate acyltransferase (356 aa).

This sequence belongs to the PlsX family. Homodimer. Probably interacts with PlsY.

Its subcellular location is the cytoplasm. It carries out the reaction a fatty acyl-[ACP] + phosphate = an acyl phosphate + holo-[ACP]. Its pathway is lipid metabolism; phospholipid metabolism. Its function is as follows. Catalyzes the reversible formation of acyl-phosphate (acyl-PO(4)) from acyl-[acyl-carrier-protein] (acyl-ACP). This enzyme utilizes acyl-ACP as fatty acyl donor, but not acyl-CoA. In Bartonella bacilliformis (strain ATCC 35685 / KC583 / Herrer 020/F12,63), this protein is Phosphate acyltransferase.